Reading from the N-terminus, the 252-residue chain is Small ribosomal subunit protein eS4 (252 aa).

Residues 43–105 form the S4 RNA-binding domain; it reads FPLLIIVRDI…TGETYRVIPV (63 aa).

Belongs to the eukaryotic ribosomal protein eS4 family.

The sequence is that of Small ribosomal subunit protein eS4 from Staphylothermus marinus (strain ATCC 43588 / DSM 3639 / JCM 9404 / F1).